Here is a 93-residue protein sequence, read N- to C-terminus: Large ribosomal subunit protein uL23cz/uL23cy (93 aa).

Belongs to the universal ribosomal protein uL23 family. Part of the 50S ribosomal subunit.

It is found in the plastid. The protein localises to the chloroplast. Binds to 23S rRNA. The sequence is that of Large ribosomal subunit protein uL23cz/uL23cy (rpl23-A) from Lactuca sativa (Garden lettuce).